Reading from the N-terminus, the 264-residue chain is DNA-binding HTH-type transcriptional repressor TrmBL2 (264 aa).

A coiled-coil region spans residues 81 to 113 (LEKFIEEWQERVKEELEAKKKAKEELIELMKPL).

This sequence belongs to the transcriptional regulator TrmB family.

It localises to the cytoplasm. Its subcellular location is the chromosome. Its function is as follows. An abundant chromosomal protein that seems to be involved in both genome architecture and transcription repression. Incubation with DNA in vitro gives fibrous structures 14.2 +/- 2.1 nm in thickness (naked DNA is 1.83 +/- 0.37 nm); does not significantly compact DNA. Binds to both coding and non-coding regions; binding within gene promoters correlates with decreased transcript levels, while binding within coding regions does not. The polypeptide is DNA-binding HTH-type transcriptional repressor TrmBL2 (Thermococcus kodakarensis (strain ATCC BAA-918 / JCM 12380 / KOD1) (Pyrococcus kodakaraensis (strain KOD1))).